The following is a 562-amino-acid chain: Zinc finger protein 579 (562 aa).

Positions Met1–Gly11 are enriched in pro residues. Residues Met1–Pro45 form a disordered region. A compositionally biased stretch (basic residues) spans Asp17–Gly35. 3 C2H2-type zinc fingers span residues Leu46–His68, His74–His96, and Leu102–His125. Arg94 is modified (omega-N-methylarginine). Disordered stretches follow at residues His120–Glu154 and Glu166–Gly199. Over residues Asp187–Glu197 the composition is skewed to basic and acidic residues. A Phosphoserine modification is found at Ser191. C2H2-type zinc fingers lie at residues His267–His289 and Phe295–His317. A disordered region spans residues Ser321–Ala377. The segment covering Arg340–Gly367 has biased composition (gly residues). C2H2-type zinc fingers lie at residues Phe382–His404, Phe410–His432, and His439–His461. Ser486 is subject to Phosphoserine. The interval Ala505–Ala530 is disordered. The segment covering Pro512–Pro525 has biased composition (pro residues).

The protein belongs to the krueppel C2H2-type zinc-finger protein family.

It is found in the nucleus. Its function is as follows. May be involved in transcriptional regulation. This Mus musculus (Mouse) protein is Zinc finger protein 579 (Znf579).